We begin with the raw amino-acid sequence, 170 residues long: Cathelicidin antimicrobial peptide (170 aa).

Residues Met1–Ala30 form the signal peptide. Residues Gln31 to Arg131 constitute a propeptide, cathelin-like domain (CLD). Intrachain disulfides connect Cys86–Cys97 and Cys108–Cys125. Positions Phe150–Gln162 are active core.

The protein belongs to the cathelicidin family. In terms of assembly, monomer, homodimer or homotrimer (in vitro). Oligomerizes as tetra- or hexamer in solution (in vitro). Post-translationally, proteolytically cleaved by proteinase PRTN3 into antibacterial peptide LL-37. Proteolytically cleaved by cathepsin CTSG and neutrophil elastase ELANE. Resistant to proteolytic degradation in solution, and when bound to both zwitterionic (mimicking mammalian membranes) and negatively charged membranes (mimicking bacterial membranes). In terms of processing, after secretion onto the skin surface, the CAMP gene product is processed by a serine protease-dependent mechanism into multiple novel antimicrobial peptides distinct from and shorter than cathelicidin LL-37. These peptides show enhanced antimicrobial action, acquiring the ability to kill skin pathogens such as S.aureus, E.coli and C.albicans. These peptides have lost the ability to stimulate CXCL8/IL8 release from keratinocytes. The peptides act synergistically, killing bacteria at lower concentrations when present together, and maintain activity at increased salt condition.

It localises to the secreted. It is found in the vesicle. Its function is as follows. Antimicrobial protein that is an integral component of the innate immune system. Binds to bacterial lipopolysaccharides (LPS). Acts via neutrophil N-formyl peptide receptors to enhance the release of CXCL2. Postsecretory processing generates multiple cathelicidin antimicrobial peptides with various lengths which act as a topical antimicrobial defense in sweat on skin. The unprocessed precursor form, cathelicidin antimicrobial peptide, inhibits the growth of Gram-negative E.coli and E.aerogenes with efficiencies comparable to that of the mature peptide LL-37 (in vitro). Functionally, antimicrobial peptide that is an integral component of the innate immune system. Binds to bacterial lipopolysaccharides (LPS). Causes membrane permeabilization by forming transmembrane pores (in vitro). Causes lysis of E.coli. Exhibits antimicrobial activity against Gram-negative bacteria such as P.aeruginosa, S.typhimurium, E.aerogenes, E.coli and P.syringae, Gram-positive bacteria such as L.monocytogenes, S.epidermidis, S.pyogenes and S.aureus, as well as vancomycin-resistant enterococci (in vitro). Exhibits antimicrobial activity against methicillin-resistant S.aureus, P.mirabilis, and C.albicans in low-salt media, but not in media containing 100 mM NaCl (in vitro). Forms chiral supramolecular assemblies with quinolone signal (PQS) molecules of P.aeruginosa, which may lead to interference of bacterial quorum signaling and perturbance of bacterial biofilm formation. May form supramolecular fiber-like assemblies on bacterial membranes. Induces cytokine and chemokine producation as well as TNF/TNFA and CSF2/GMCSF production in normal human keratinocytes. Exhibits hemolytic activity against red blood cells. In terms of biological role, exhibits antimicrobial activity against E.coli and B.megaterium (in vitro). This is Cathelicidin antimicrobial peptide from Nomascus leucogenys (Northern white-cheeked gibbon).